The chain runs to 172 residues: MDLRHLIQDVPDFPKPGILFRDISPLLRDPDGWDEVMRQLGDLCTELKPDLIVGIESRGFIVGTALATNRKIGFVPVRKPGKLPGDVLGIDYSLEYGSDRLEIHADALQGHPRVLLVDDLLATGGTARATVELIEKAGGDLVGCGFVIELAALGGRQQLPVEIPVKSLIIYS.

Belongs to the purine/pyrimidine phosphoribosyltransferase family. In terms of assembly, homodimer.

It is found in the cytoplasm. The enzyme catalyses AMP + diphosphate = 5-phospho-alpha-D-ribose 1-diphosphate + adenine. It participates in purine metabolism; AMP biosynthesis via salvage pathway; AMP from adenine: step 1/1. Catalyzes a salvage reaction resulting in the formation of AMP, that is energically less costly than de novo synthesis. The sequence is that of Adenine phosphoribosyltransferase from Prochlorococcus marinus (strain MIT 9313).